A 2873-amino-acid polypeptide reads, in one-letter code: MSSPRLIPLWKDLKLLLNDTINKSKQPSEDPKNCLIVLSDRSQAVAWMKSKTEDMVEKRTFSMTERLPPIQSMVHAGSFHILVVYCGDLILRLFGDHFRAFKPLGKVPCRFNISCLCYDPEMKMLLSGILGAVVTWVIELGGTGLQIAHMVSMPGDELVQDIVLNGPSGSLLALCETVVRVLMHQGKGQLGEVKRFTSTSSGSSITCCFTCFDQGFLYAGNQAGEIQVWSLQQGHPLHSFQAHQSGVICIRSRPEAHTLLTAGSDSLIKEWNLTSGSLLRRLELGEELYRLQFIDSITFFCQTAHSFSLHRLPCFYSLFNVCGSAPQQLRRVCCGNNWFRILCTTEDGLLRFVSPVTGDLLVITWPFSILDQAVDWAYDPGKEELFVATGSSEVLVFDTTRCPCPAKYLLGTSPNSQDFVQCLAYGHFNLGRGLEGLIFSGHQSGVIRVLSQHSCARLEKFMHFGAVLALSTLSGGIFGGQGNSLLCSYGMDDYVHLSEAVLDGVKVQLRPLASILSSCHLTHLILLPKSVGAITETNCLRLWKFHDFLSSGSQNGLKFIETLPLHLCAITSFDVCLSLSLFVTGSADGSVRIWDFHGRLIGILDSSLHFGPVCFANDRGDLLVTFNQSLYLVSCLKLLPPALLTRLSFMSISDEVLEVPKPFIPSFFFSFETMFVPKYIYPGQAQQKLVGLEKLVNNRAIAFDHSVPHVIEEDEEGSPVLLRSSMHYSLQDMEDWMQVSKRYQCHYVLPPQLQLTSWDGLNPYQILRYYFGHGREWLFAPDCYIPNSVIRARLWPEGTPIYLQCNLHAPQRELEWDRSQEFFFWHSRVRAISNTEYPKNKEEDEHFLEMRLSKDVTYSVLTDGANRSWLGRKMSEITINSMIETMLNIMVHASLLKYQCCVGALGQIFASYQVSPALRSETARRLLNDTTNSNPLIRELAWEGLKRLGMITHLFAMPLAQGLMDKDERVRIKTLSLMAEIGIHSRTSLLQLTQKQETFREMQQQMIGEEPLDHLLGMRATDLQILSTQVEQRLNENLTLSHRDEKPAFSLDVSMPSELKSSLKPPTVSEESEVAIKPSKGQRRGQAGVKKHSQKWLRGLKKTKERDSKQMSTEPGLLEDESGTEAAPIEMEEASVYSQWSSSTSVIKLSKDVDSQEKDISKDHIALTLKRLQKIRDKRDKKATAQKLKKKHKKKGKEAKVINEETTPPVMEQPVTKKVKIQGRGASGISGRRSTAGDGSSWRDDLCRLMALRISGSQTKMSENLNAELVTFAQEMLVDRHPSWELFQEICPLLKKESKVLLEDLDWDVVPPEKKPIFIQEGAIREDMIQGVTQEVIRHKEVMPREEEQAQKKARDMLGLEETQVILKKGKKVIFLEPGNVTMGKEISKKEEKKTFQKSPKQGRKAVQKERKVGKIKREMTKEERDMSEEVEEMATLEEKVVKQEGKLVMIERTPSWQDWKKAWDEWKQVHGETRKSWKAWKEEWEKRLLQEEEKLHQAGEKLSPEEEMLQEDKKLKWEEWKQVWENMLSSKSKEQQYKDEEEVTLEEEVSREGEEKEQQVTEEQRHIQEEHKWARIHRKRARAEKKRAQEERKLAQEEEKLAQEERQLAQEERKLAQAYVKITQDDREMAQAEGKFAQKEETLAQRGEKLSQEAEKLAQKRKKLAKKWEKVAREEEKLAKKGGKLAEVKNILAQKVEELPQREQNLDWQEKELAQELEELEWDMEELSWKEEELNQEEGKLVEEKKKLAEEEEALAWQREKLSEEETKLAQEEELLIQEKEKLAQHKEKMPEEEERLGRKREQLIEKKMKLAQKRERWINSMEELTKNKMILYQKKNLAQEKKNLAQEKEKLAQRKENLLYNKERLTHSKKQLVQVKNKLGMFNKILAQVEEKLTQEKETVIKKKEKLAETEKKLVQVEDSLAKKQEKLAQEKMKLALEKAMVQGKKRLRGELDIAKEEKALNLEMKRLAEEKMRLVEGKETLSKGETPETSRQRKMTQVEQELFERKLSLEEKILLHEDRILAMEESEIAKGKLEFTRGQRIFVQGQRKLAKASRKLIKKRESLSKEPAKLNKILKALQKLTRDERKLTQEEIKMTKMKRALFVKERRLSIEQSKLDIKEWDFSEKRSELTKDEKKLARKQRKLANKMRRMINKEEKMTEEESKLARKHSEVILDDEEEGGIEEEEVIPFLKRRWRKRKEAKRGDKPKEKFSSQVDEVESEEHFSEEMESLLDELEKQESLSSEEEEEREEEEEREEEEEREEEEERKEEEEGEEKQVEKEEEEKKKKKKEKKKEEVQEKEEVFEEKEEIMSEEETESLSDEEEEEESCSLEEEVDREKEILKKEKQFKLQEQRRKSLRGRERVLSILRGVPHGKGRAIRLGVLKSPLKKLMSTALEMKEKTPVPVPEKQISWEDKKATVVEIPRKFLGTMDKEREVMGKYEPIPPHVLGTVLESQAQDLKTPFMSHILRRTVEAEELQHKPLGAWWKWFLQHPPLMGQTEVQLPLSQIPAKEQHADVSLSDVEWIRHVLERMEAGEQLSRDGFHRLCQLLKDLASKGNLEWLHLAKHEAIVYRHRQALESQDTRISSRQSMSPKYLKVIPPIKAKEKESWPKPLAVPTQKSPLATKRIPDPRAKNWHLLGEPYRSERAQQISIAHKEMEMQYFYPATRDIFPSAHASVEKQTLALMFQKDFWDFKDKRRFPKLPKLEKKTQPISKKKEELPLWETFVALYHVLRMLQQRYPKDSTAWMEQFYQLMDLYQLKSPRIQKLLQELLMREEPQPQEIIYEEALKATELVPGERLFCCLFCGSSHTPRSPQEFQGAVPLPWQNCVRTILPVGIARYGILELAWKSLPEADLHLTKALTHTVAPTL.

WD repeat units follow at residues 108 to 146 (PCRFNISCLCYDPEMKMLLSGILGAVVTWVIELGGTGLQ), 199 to 239 (TSSG…PLHS), 242 to 283 (AHQS…RRLE), 368 to 407 (SILDQAVDWAYDPGKEELFVATGSSEVLVFDTTRCPCPAK), 415 to 460 (NSQD…RLEK), 516 to 553 (LSSCHLTHLILLPKSVGAITETNCLRLWKFHDFLSSGS), and 565 to 604 (LHLCAITSFDVCLSLSLFVTGSADGSVRIWDFHGRLIGIL). 5 disordered regions span residues 1049 to 1124 (FSLD…ESGT), 1177 to 1199 (DKRDKKATAQKLKKKHKKKGKEA), 1392 to 1413 (EKKTFQKSPKQGRKAVQKERKV), 1531 to 1607 (SKSK…QEER), and 2199 to 2338 (KRKE…EEVD). 2 stretches are compositionally biased toward basic residues: residues 1089–1101 (VKKHSQKWLRGLK) and 1187–1197 (KLKKKHKKKGK). The segment covering 1549–1574 (EVSREGEEKEQQVTEEQRHIQEEHKW) has biased composition (basic and acidic residues). A compositionally biased stretch (basic residues) spans 1575–1586 (ARIHRKRARAEK). Basic and acidic residues-rich tracts occupy residues 1587-1607 (KRAQEERKLAQEEEKLAQEER) and 2204-2213 (KRGDKPKEKF). Over residues 2244–2276 (SSEEEEEREEEEEREEEEEREEEEERKEEEEGE) the composition is skewed to acidic residues. Residues 2277 to 2287 (EKQVEKEEEEK) show a composition bias toward basic and acidic residues. A compositionally biased stretch (acidic residues) spans 2304-2337 (EVFEEKEEIMSEEETESLSDEEEEEESCSLEEEV).

The polypeptide is WD repeat-containing protein 87 (WDR87) (Homo sapiens (Human)).